Here is a 68-residue protein sequence, read N- to C-terminus: Large ribosomal subunit protein uL29 (68 aa).

This sequence belongs to the universal ribosomal protein uL29 family.

The protein is Large ribosomal subunit protein uL29 of Picosynechococcus sp. (strain ATCC 27264 / PCC 7002 / PR-6) (Agmenellum quadruplicatum).